A 136-amino-acid polypeptide reads, in one-letter code: Protein NrdI (136 aa).

This sequence belongs to the NrdI family.

Probably involved in ribonucleotide reductase function. The sequence is that of Protein NrdI from Salmonella typhi.